The primary structure comprises 100 residues: Urease subunit gamma (100 aa).

Belongs to the urease gamma subunit family. Heterotrimer of UreA (gamma), UreB (beta) and UreC (alpha) subunits. Three heterotrimers associate to form the active enzyme.

The protein resides in the cytoplasm. The enzyme catalyses urea + 2 H2O + H(+) = hydrogencarbonate + 2 NH4(+). The protein operates within nitrogen metabolism; urea degradation; CO(2) and NH(3) from urea (urease route): step 1/1. This Yersinia aldovae protein is Urease subunit gamma.